Consider the following 655-residue polypeptide: WD repeat-containing protein 70 (655 aa).

Disordered regions lie at residues 1-24 and 43-170; these read MEHSGPSEVTGADTAGPDPQLAVT and FEQT…PIHR. Positions 45–78 are enriched in basic and acidic residues; that stretch reads QTRRTAVERSRKTLEAREKEEEMNREKELRKQLE. Over residues 99–112 the composition is skewed to low complexity; that stretch reads RDTSSSDSDHSSGS. Residues 148–165 show a composition bias toward acidic residues; sequence EEGEDDDDDDLEDEGEED. WD repeat units follow at residues 181-220, 228-269, 282-322, 331-370, 377-416, 422-467, and 470-509; these read HGTKTVSALGLDPSGARLVTGGYDYDVKFWDFAGMDASFK, CECH…ECIK, GHTA…KQKS, GKKVIPTTCTYSRDGNLVAAACQNGSIQIWDRNLTVHPKF, APGTDTSCVAFSYDGNVLASRGGDDTLKLWDVRQFNKPLF, PTLF…RVYE, and ITDASVVRCLWHPKLNQIMVGTGNGLAKVYYDPNKSQRGA. Lysine 297 is covalently cross-linked (Glycyl lysine isopeptide (Lys-Gly) (interchain with G-Cter in SUMO2)). Lysine 453 carries the N6-acetyllysine modification. A compositionally biased stretch (basic and acidic residues) spans 541-566; that stretch reads REPRQRSTRKQLEKDRLDPLKSHKPE. The disordered stretch occupies residues 541–582; it reads REPRQRSTRKQLEKDRLDPLKSHKPEPPVAGPGRGGRVGTHG. The segment covering 572-582 has biased composition (gly residues); that stretch reads PGRGGRVGTHG. Threonine 580 is subject to Phosphothreonine. Glycyl lysine isopeptide (Lys-Gly) (interchain with G-Cter in SUMO2) cross-links involve residues lysine 591 and lysine 597. Phosphoserine occurs at positions 622 and 639. Residues 632 to 655 are disordered; it reads TMFAQVESDDEESKNEPEWKKRKI. Residues 645 to 655 show a composition bias toward basic and acidic residues; it reads KNEPEWKKRKI.

The protein belongs to the WD repeat GAD-1 family.

The sequence is that of WD repeat-containing protein 70 (Wdr70) from Rattus norvegicus (Rat).